A 162-amino-acid chain; its full sequence is MKLDQVAKSLLLKEFVSGMILGMRYFFKPKATINYPFEMGHRGPRFRGEHALRRYPNGEERCIACKLCEAICPAQAITIEAGPRRNDGTRRTTRYDIDMVKCIYCGMCQEACPVDAIVEGPNFEFSVETREELLYDKQKLLLNGDRWEREIARNIAMDAPYR.

2 4Fe-4S ferredoxin-type domains span residues 52–82 (LRRYPNGEERCIACKLCEAICPAQAITIEAG) and 93–122 (TRYDIDMVKCIYCGMCQEACPVDAIVEGPN). Cys62, Cys65, Cys68, Cys72, Cys102, Cys105, Cys108, and Cys112 together coordinate [4Fe-4S] cluster.

This sequence belongs to the complex I 23 kDa subunit family. NDH-1 is composed of 14 different subunits. Subunits NuoA, H, J, K, L, M, N constitute the membrane sector of the complex. [4Fe-4S] cluster is required as a cofactor.

The protein localises to the cell inner membrane. It catalyses the reaction a quinone + NADH + 5 H(+)(in) = a quinol + NAD(+) + 4 H(+)(out). Functionally, NDH-1 shuttles electrons from NADH, via FMN and iron-sulfur (Fe-S) centers, to quinones in the respiratory chain. The immediate electron acceptor for the enzyme in this species is believed to be ubiquinone. Couples the redox reaction to proton translocation (for every two electrons transferred, four hydrogen ions are translocated across the cytoplasmic membrane), and thus conserves the redox energy in a proton gradient. This chain is NADH-quinone oxidoreductase subunit I, found in Methylobacterium radiotolerans (strain ATCC 27329 / DSM 1819 / JCM 2831 / NBRC 15690 / NCIMB 10815 / 0-1).